Reading from the N-terminus, the 349-residue chain is DNA polymerase IV (349 aa).

The 185-residue stretch at 3–187 (VLFVDFDYFF…LDISKVPGVG (185 aa)) folds into the UmuC domain. Residues aspartate 7 and aspartate 105 each contribute to the Mg(2+) site. Glutamate 106 is an active-site residue.

The protein belongs to the DNA polymerase type-Y family. In terms of assembly, monomer. The cofactor is Mg(2+).

Its subcellular location is the cytoplasm. It catalyses the reaction DNA(n) + a 2'-deoxyribonucleoside 5'-triphosphate = DNA(n+1) + diphosphate. Functionally, poorly processive, error-prone DNA polymerase involved in untargeted mutagenesis. Copies undamaged DNA at stalled replication forks, which arise in vivo from mismatched or misaligned primer ends. These misaligned primers can be extended by PolIV. Exhibits no 3'-5' exonuclease (proofreading) activity. May be involved in translesional synthesis. In Metallosphaera sedula (strain ATCC 51363 / DSM 5348 / JCM 9185 / NBRC 15509 / TH2), this protein is DNA polymerase IV.